The sequence spans 276 residues: Formamidopyrimidine-DNA glycosylase (276 aa).

Pro-2 (schiff-base intermediate with DNA) is an active-site residue. Glu-3 functions as the Proton donor in the catalytic mechanism. Lys-58 acts as the Proton donor; for beta-elimination activity in catalysis. 3 residues coordinate DNA: His-94, Arg-112, and Arg-157. The FPG-type zinc-finger motif lies at 242–276 (FVYDRAGEPCRVCGAPIRQIVQGQRSTYYCPNCQR). Arg-266 functions as the Proton donor; for delta-elimination activity in the catalytic mechanism.

The protein belongs to the FPG family. Monomer. It depends on Zn(2+) as a cofactor.

The enzyme catalyses Hydrolysis of DNA containing ring-opened 7-methylguanine residues, releasing 2,6-diamino-4-hydroxy-5-(N-methyl)formamidopyrimidine.. It carries out the reaction 2'-deoxyribonucleotide-(2'-deoxyribose 5'-phosphate)-2'-deoxyribonucleotide-DNA = a 3'-end 2'-deoxyribonucleotide-(2,3-dehydro-2,3-deoxyribose 5'-phosphate)-DNA + a 5'-end 5'-phospho-2'-deoxyribonucleoside-DNA + H(+). Its function is as follows. Involved in base excision repair of DNA damaged by oxidation or by mutagenic agents. Acts as a DNA glycosylase that recognizes and removes damaged bases. Has a preference for oxidized purines, such as 7,8-dihydro-8-oxoguanine (8-oxoG). Has AP (apurinic/apyrimidinic) lyase activity and introduces nicks in the DNA strand. Cleaves the DNA backbone by beta-delta elimination to generate a single-strand break at the site of the removed base with both 3'- and 5'-phosphates. This Burkholderia thailandensis (strain ATCC 700388 / DSM 13276 / CCUG 48851 / CIP 106301 / E264) protein is Formamidopyrimidine-DNA glycosylase.